Consider the following 59-residue polypeptide: MAKLEITLKRSLIGRPQPQRRTVQALGLGKTNSVVVKEDNPAIRGMITKVSHLVDVKEV.

This sequence belongs to the universal ribosomal protein uL30 family. In terms of assembly, part of the 50S ribosomal subunit.

This Listeria welshimeri serovar 6b (strain ATCC 35897 / DSM 20650 / CCUG 15529 / CIP 8149 / NCTC 11857 / SLCC 5334 / V8) protein is Large ribosomal subunit protein uL30.